Consider the following 55-residue polypeptide: Large ribosomal subunit protein bL33 (55 aa).

It belongs to the bacterial ribosomal protein bL33 family.

This is Large ribosomal subunit protein bL33 from Wigglesworthia glossinidia brevipalpis.